The chain runs to 681 residues: DNA ligase (681 aa).

NAD(+)-binding positions include 35 to 39 (DAEYD), 84 to 85 (SI), and Glu-121. The active-site N6-AMP-lysine intermediate is the Lys-123. NAD(+)-binding residues include Arg-144, Glu-180, Lys-300, and Lys-324. The Zn(2+) site is built by Cys-418, Cys-421, Cys-436, and Cys-442. In terms of domain architecture, BRCT spans 601-681 (AADGPASGKT…GLRRLLEQPA (81 aa)).

The protein belongs to the NAD-dependent DNA ligase family. LigA subfamily. Mg(2+) is required as a cofactor. It depends on Mn(2+) as a cofactor.

The enzyme catalyses NAD(+) + (deoxyribonucleotide)n-3'-hydroxyl + 5'-phospho-(deoxyribonucleotide)m = (deoxyribonucleotide)n+m + AMP + beta-nicotinamide D-nucleotide.. Its function is as follows. DNA ligase that catalyzes the formation of phosphodiester linkages between 5'-phosphoryl and 3'-hydroxyl groups in double-stranded DNA using NAD as a coenzyme and as the energy source for the reaction. It is essential for DNA replication and repair of damaged DNA. This is DNA ligase from Aromatoleum aromaticum (strain DSM 19018 / LMG 30748 / EbN1) (Azoarcus sp. (strain EbN1)).